A 41-amino-acid polypeptide reads, in one-letter code: uncharacterized protein (41 aa).

This is an uncharacterized protein from Treponema pallidum (strain Nichols).